We begin with the raw amino-acid sequence, 141 residues long: D-aminoacyl-tRNA deacylase (141 aa).

The short motif at 133-134 (GP) is the Gly-cisPro motif, important for rejection of L-amino acids element.

This sequence belongs to the DTD family. Homodimer.

It is found in the cytoplasm. It carries out the reaction glycyl-tRNA(Ala) + H2O = tRNA(Ala) + glycine + H(+). It catalyses the reaction a D-aminoacyl-tRNA + H2O = a tRNA + a D-alpha-amino acid + H(+). Its function is as follows. An aminoacyl-tRNA editing enzyme that deacylates mischarged D-aminoacyl-tRNAs. Also deacylates mischarged glycyl-tRNA(Ala), protecting cells against glycine mischarging by AlaRS. Acts via tRNA-based rather than protein-based catalysis; rejects L-amino acids rather than detecting D-amino acids in the active site. By recycling D-aminoacyl-tRNA to D-amino acids and free tRNA molecules, this enzyme counteracts the toxicity associated with the formation of D-aminoacyl-tRNA entities in vivo and helps enforce protein L-homochirality. The sequence is that of D-aminoacyl-tRNA deacylase from Beutenbergia cavernae (strain ATCC BAA-8 / DSM 12333 / CCUG 43141 / JCM 11478 / NBRC 16432 / NCIMB 13614 / HKI 0122).